Here is a 105-residue protein sequence, read N- to C-terminus: MAEWNGEYVSPYAEHGKKSEQVKKITVSIPLKVLKILTDERTRRQVNNLRHATNSELLCEAFLHAFTGQPLPNDEDLRKERSDEIPEAAKLLMRELGVDPDTWEY.

It belongs to the MetJ family. In terms of assembly, homodimer.

The protein resides in the cytoplasm. Functionally, this regulatory protein, when combined with SAM (S-adenosylmethionine) represses the expression of the methionine regulon and of enzymes involved in SAM synthesis. This is Met repressor from Serratia proteamaculans (strain 568).